A 309-amino-acid chain; its full sequence is Cytochrome c biogenesis protein CcsA (309 aa).

Helical transmembrane passes span 18-38 (LGIL…GAVF), 43-63 (FFIV…QLLF), 67-87 (ISGH…AWGI), 102-122 (IIPS…CFVL), 148-168 (VMLS…VLFI), 216-236 (SILI…VWAN), 250-267 (TWAF…HMRI), and 279-299 (LATS…FLGI).

The protein belongs to the CcmF/CycK/Ccl1/NrfE/CcsA family. In terms of assembly, may interact with ccs1.

It is found in the cellular thylakoid membrane. Its function is as follows. Required during biogenesis of c-type cytochromes (cytochrome c6 and cytochrome f) at the step of heme attachment. The polypeptide is Cytochrome c biogenesis protein CcsA (Prochlorococcus marinus (strain MIT 9312)).